A 614-amino-acid chain; its full sequence is Leucine-rich repeat and immunoglobulin-like domain-containing nogo receptor-interacting protein 1 (614 aa).

The N-terminal stretch at 1 to 35 is a signal peptide; sequence MLAGGVRSMPSPLLACWQPILLLVLGSVLSGSATG. 2 cysteine pairs are disulfide-bonded: Cys36-Cys42 and Cys40-Cys51. An LRRNT domain is found at 36–65; it reads CPPRCECSAQDRAVLCHRKRFVAVPEGIPT. Residues 36–555 are Extracellular-facing; it reads CPPRCECSAQ…FDIKTLIIAT (520 aa). LRR repeat units follow at residues 66-87, 90-111, 114-135, 138-159, 162-183, 186-207, 210-231, 258-279, 282-303, 306-327, and 330-351; these read ETRL…EFAS, HLEE…AFNN, NLRT…VFTG, NLTK…MFQD, NLKS…AFSG, SLEQ…ALSH, GLIV…SFKR, NLTS…AVRH, YLRF…MLHE, RLQE…AFRG, and YLRV…VFHS. An N-linked (GlcNAc...) asparagine glycan is attached at Asn138. Asn196 carries N-linked (GlcNAc...) asparagine glycosylation. Residues Asn258, Asn268, and Asn287 are each glycosylated (N-linked (GlcNAc...) asparagine). Asn335 is a glycosylation site (N-linked (GlcNAc...) asparagine). One can recognise an LRRCT domain in the interval 363 to 417; it reads NPLACDCRLLWVFRRRWRLNFNRQQPTCATPEFVQGKEFKDFPDVLLPNYFTCRR. Disulfide bonds link Cys367/Cys390, Cys369/Cys415, and Cys440/Cys491. An Ig-like C2-type domain is found at 405–507; that stretch reads PDVLLPNYFT…GNDSMPAHLH (103 aa). N-linked (GlcNAc...) asparagine glycosylation is found at Asn486, Asn499, Asn520, and Asn536. The chain crosses the membrane as a helical span at residues 556 to 576; sequence TMGFISFLGVVLFCLVLLFLW. Topologically, residues 577–614 are cytoplasmic; the sequence is SRGKGNTKHNIEIEYVPRKSDAGISSADAPRKFNMKMI. Position 596 is a phosphoserine (Ser596).

Homotetramer. Forms a ternary complex with RTN4R/NGFR and RTN4R/TNFRSF19. Interacts with NGRF, RTN4R and MYT1L. N-glycosylated. Contains predominantly high-mannose glycans.

Its subcellular location is the cell membrane. Its function is as follows. Functional component of the Nogo receptor signaling complex (RTN4R/NGFR) in RhoA activation responsible for some inhibition of axonal regeneration by myelin-associated factors. Is also an important negative regulator of oligodentrocyte differentiation and axonal myelination. Acts in conjunction with RTN4 and RTN4R in regulating neuronal precursor cell motility during cortical development. The protein is Leucine-rich repeat and immunoglobulin-like domain-containing nogo receptor-interacting protein 1 (LINGO1) of Pongo abelii (Sumatran orangutan).